The following is a 423-amino-acid chain: MLRVRCLRGGSRGAEALHYIGSRLGRTVTGWVQRTFQSTQAATASSRNSCAADDKATDPLPKDCPVSSFNEWDPLEEVIVGRAENACVPPFTVEVKANTYDKHWPFYQKYGGSYFPKDHLQKAVAEIEEMCNILKMEGVTVRRPDPIDWSLKYKTPDFESTGLYGAMPRDILIVVGNEIIEAPMAWRARFFEYRAYRTIIKDYFRRGAKWTTAPKPTMADELYDQDYPIHSVEDRHKLAAQGKFVTTEFEPCFDAADFIRAGRDIFVQRSQVTNYMGIEWMRKHLAPDYRVHIVSFKDPNPMHIDATFNIIGPGLVLSNPDRPCHQIDLFKKAGWTIVTPPTPIIPDDHPLWMSSKWLSMNVLMLDEKRVMVDANEVPIQKMFEKLGISTIKVSIRNANSLGGGFHCWTCDVRRRGTLQSYFD.

A mitochondrion-targeting transit peptide spans 1 to 43 (MLRVRCLRGGSRGAEALHYIGSRLGRTVTGWVQRTFQSTQAAT). Phosphoserine is present on residues S46 and S49. Residue D170 coordinates arginine. Active-site residues include D254 and H303. Residues D305, R322, S354, and S355 each coordinate arginine. N6-acetyllysine is present on K385. C407 functions as the Amidino-cysteine intermediate in the catalytic mechanism.

Belongs to the amidinotransferase family. In terms of assembly, homodimer.

The protein localises to the mitochondrion inner membrane. It catalyses the reaction L-arginine + glycine = guanidinoacetate + L-ornithine. The enzyme catalyses 4-aminobutanoate + L-arginine = 4-guanidinobutanoate + L-ornithine. The catalysed reaction is beta-alanine + L-arginine = 3-guanidinopropanoate + L-ornithine. It carries out the reaction taurine + L-arginine = taurocyamine + L-ornithine. Its pathway is amine and polyamine biosynthesis; creatine biosynthesis; creatine from L-arginine and glycine: step 1/2. Its function is as follows. Transamidinase that catalyzes the transfer of the amidino group of L-arginine onto the amino moiety of acceptor metabolites such as glycine, beta-alanine, gamma-aminobutyric acid (GABA) and taurine yielding the corresponding guanidine derivatives. Catalyzes the rate-limiting step of creatine biosynthesis, namely the transfer of the amidino group from L-arginine to glycine to generate guanidinoacetate, which is then methylated by GAMT to form creatine. Provides creatine as a source for ATP generation in tissues with high energy demands, in particular skeletal muscle, heart and brain. This chain is Glycine amidinotransferase, mitochondrial (GATM), found in Bos taurus (Bovine).